We begin with the raw amino-acid sequence, 148 residues long: Protein Turandot Z (148 aa).

Residues methionine 1–alanine 23 form the signal peptide.

The protein belongs to the Turandot family.

It is found in the secreted. Its function is as follows. A humoral factor that may play a role in stress tolerance. The chain is Protein Turandot Z from Drosophila sechellia (Fruit fly).